The following is a 473-amino-acid chain: H(+)/Cl(-) exchange transporter ClcA (473 aa).

Topologically, residues 1–32 are cytoplasmic; the sequence is MKTDTPTFEAQQIVRLRRGRLIRRLVQRDKTP. Residues 33 to 69 traverse the membrane as a helical segment; the sequence is LAILLMAAVVGTLTGLVGVAFEKAVSWVQNMRIGALV. The Periplasmic segment spans residues 70–76; it reads QVADHAF. Residues 77-100 form a helical membrane-spanning segment; the sequence is LLWPLAFILSALLAMVGYFLVRKF. Positions 106-110 match the Selectivity filter part_1 motif; that stretch reads GSGIP. Chloride is bound at residue Ser-107. The segment at residues 109–116 is an intramembrane region (helical); that stretch reads IPEIEGAL. The Cytoplasmic segment spans residues 117 to 123; that stretch reads EELRPVR. A run of 2 helical transmembrane segments spans residues 124-141 and 148-166; these read WWRVLPVKFIGGMGTLGA and EGPTVQIGGNLGRMVLDVF. Positions 146 to 150 match the Selectivity filter part_2 motif; the sequence is GREGP. At 167–176 the chain is on the cytoplasmic side; it reads RMRSAEARHT. Intramembrane regions (helical) lie at residues 177–189 and 193–201; these read LLATGAAAGLSAA and PLAGILFII. Residues 202 to 214 are Cytoplasmic-facing; the sequence is EEMRPQFRYNLIS. The helical transmembrane segment at 215–232 threads the bilayer; sequence IKAVFTGVIMSSIVFRIF. Residues 233–252 are Periplasmic-facing; that stretch reads NGEAPIIEVGKLSNAPVNTL. A helical membrane pass occupies residues 253 to 281; sequence WLYLVLGIIFGCVGPVFNTLVLRTQDMFQ. Residues 282–287 lie on the Cytoplasmic side of the membrane; it reads RFHGGE. Residues 288-309 traverse the membrane as a helical segment; it reads IKKWVLMGGAIGGLCGILGLIE. Residues 310–329 lie on the Periplasmic side of the membrane; that stretch reads PEAAGGGFNLIPIAAAGNFS. The next 2 helical transmembrane spans lie at 330–349 and 355–376; these read VGLLLFIFITRVVTTLLCFS and GIFAPMLALGTLLGTAFGMAAA. A Selectivity filter part_3 motif is present at residues 355 to 359; the sequence is GIFAP. Chloride is bound by residues Ile-356 and Phe-357. The Periplasmic portion of the chain corresponds to 377–386; the sequence is VLFPQYHLEA. Positions 387–401 form an intramembrane region, helical; that stretch reads GTFAIAGMGALMAAS. Residues 402-404 constitute an intramembrane region (note=Loop between two helices); sequence VRA. Positions 405–416 form an intramembrane region, helical; it reads PLTGIVLVLEMT. The segment at residues 417–421 is an intramembrane region (note=Loop between two helices); that stretch reads DNYQL. Residues 422 to 438 form a helical membrane-spanning segment; the sequence is ILPMIITCLGATLLAQF. The Cytoplasmic portion of the chain corresponds to 439-473; sequence LGGKPLYSTILARTLAKQDAEQAAKNQSTPAGENT. Chloride is bound at residue Tyr-445.

The protein belongs to the chloride channel (TC 2.A.49) family. ClcA subfamily. Homodimer.

It is found in the cell inner membrane. The catalysed reaction is 2 chloride(in) + H(+)(out) = 2 chloride(out) + H(+)(in). In terms of biological role, proton-coupled chloride transporter. Functions as antiport system and exchanges two chloride ions for 1 proton. Probably acts as an electrical shunt for an outwardly-directed proton pump that is linked to amino acid decarboxylation, as part of the extreme acid resistance (XAR) response. The protein is H(+)/Cl(-) exchange transporter ClcA of Salmonella arizonae (strain ATCC BAA-731 / CDC346-86 / RSK2980).